We begin with the raw amino-acid sequence, 375 residues long: Pectate lyase 1 (375 aa).

A signal peptide spans 1-21; that stretch reads MASCTLLAVLVFLCAIVSCFS. The cysteines at positions 28 and 45 are disulfide-linked. Asn-110 carries an N-linked (GlcNAc...) asparagine glycan. An intrachain disulfide couples Cys-128 to Cys-147. A glycan (N-linked (GlcNAc...) asparagine) is linked at Asn-148. Asp-170 lines the Ca(2+) pocket. Asn-178 carries an N-linked (GlcNAc...) asparagine glycan. Ca(2+) is bound by residues Asp-194 and Asp-198. Residue Arg-250 is part of the active site. Asn-293 is a glycosylation site (N-linked (GlcNAc...) asparagine). Cys-306 and Cys-312 are oxidised to a cystine. Asn-352 is a glycosylation site (N-linked (GlcNAc...) asparagine).

It belongs to the polysaccharide lyase 1 family. Amb a subfamily. The cofactor is Ca(2+).

It catalyses the reaction Eliminative cleavage of (1-&gt;4)-alpha-D-galacturonan to give oligosaccharides with 4-deoxy-alpha-D-galact-4-enuronosyl groups at their non-reducing ends.. Its pathway is glycan metabolism; pectin degradation; 2-dehydro-3-deoxy-D-gluconate from pectin: step 2/5. In terms of biological role, has pectate lyase activity. The sequence is that of Pectate lyase 1 from Chamaecyparis obtusa (Hinoki false-cypress).